Reading from the N-terminus, the 144-residue chain is Large ribosomal subunit protein uL15 (144 aa).

The disordered stretch occupies residues 1–48 (MQLNNLKPADGSKHAKRRVGRGIGSGLGKTAGRGHKGQKSRSGGFHKV). Residues 21–31 (RGIGSGLGKTA) show a composition bias toward gly residues.

This sequence belongs to the universal ribosomal protein uL15 family. Part of the 50S ribosomal subunit.

Binds to the 23S rRNA. This is Large ribosomal subunit protein uL15 from Cupriavidus metallidurans (strain ATCC 43123 / DSM 2839 / NBRC 102507 / CH34) (Ralstonia metallidurans).